The sequence spans 453 residues: MDQTSIQASGGESATASTLKYMPGFGNDFETESLPGALPQGQNSPQKCNYGLYAEQLSGSPFTAPRGTNERSWLYRIRPSVRHTRRFSNASYPLWKTAPCLDEHSLPLGQLRWDPIPAPEERLTFLEGVRTITTAGDAATQVGMSAHAYVFNQDMVDDYFFNADGELLIVPQLGALRVFTEMGIMDVEPLEICLIPRGMMFKILKTGEQAVWRGYICENYGAKFTLPDRGPIGANCLANPRDFKTPVAAFEDKETPCRVHVKWCGKFYVTEIGHSPLDVVAWHGNYAPFKYDLRTFSPVGAIRFDHPDPSIFSVLTAPTEDAGTANVDFVIFPPRWLVAEHTFRPPWYHRNIMSEFMGLIHGQYDAKEEGFVPGGMSLHNMMLPHGPDALAFEKAANAELKPVKLDHTMAFMFETRYPQQLTKYAAELETLQDDYLECWDGLERKFDGTPGIK.

His-306 acts as the Proton acceptor in catalysis. Fe cation-binding residues include His-349 and Glu-355. Residues Tyr-364 and His-385 each contribute to the homogentisate site. His-385 serves as a coordination point for Fe cation.

It belongs to the homogentisate dioxygenase family. Hexamer; dimer of trimers. Fe cation is required as a cofactor.

It carries out the reaction homogentisate + O2 = 4-maleylacetoacetate + H(+). It participates in amino-acid degradation; L-phenylalanine degradation; acetoacetate and fumarate from L-phenylalanine: step 4/6. In terms of biological role, involved in the catabolism of homogentisate (2,5-dihydroxyphenylacetate or 2,5-OH-PhAc), a central intermediate in the degradation of phenylalanine and tyrosine. Catalyzes the oxidative ring cleavage of the aromatic ring of homogentisate to yield maleylacetoacetate. The sequence is that of Homogentisate 1,2-dioxygenase from Rhizobium leguminosarum bv. trifolii (strain WSM2304).